The primary structure comprises 704 residues: MTEKQVFKTTWGGRPLEVEIGQLAKQANGAVLVRYGDTVVLSAAVASKEAKDVDFFPLTVNYEEKMYAVGKIPGGFIKREGRPSERATLTARLIDRPIRPMFSEGFRNEVQITNIVMSVEQDCTPEMAAMFGSSLALAISDIPFDGPIAGVDVGRINGEYVLNPTVEQAEQTDIELTVAGTKEAINMVESGAKEVSEEDMLGALLFGFDAIKELVAFQEEIVAAVGKPKMDVDLLQVDADLKKEIFDAYYNTMKTAVMTEEKLAREVEIDKVKDTVKEVYAEKFSEHEEEAQLLKEVKQIAEDLEKDVVRELITIDKIRPDGRKLDEIRHLSSEVSILPRVHGSGLFTRGQTQALSVCTLAPLGEHQIIDGLGVQDSKRFIHHYNFPQFSVGSTGRAGSPGRREIGHGALGERALAQIIPSEEDFPYTIRLVAEVLESNGSSSQASICAGTLALMDAGVPIKAPVAGIAMGLVSDGENYTILTDIQGLEDHLGDMDFKVAGTKDGITALQMDIKIQGITEQILTEALDQAKKARMEILEELTTTIAAPREELSQYAPKIEMIQIKPAKIKDVIGKGGETINSIIDETGVKIDIDQDGNVSIASSDAEMIKKAIKIIEELTKEVEVGQVYLAKVVRIEKFGAFVNLIKGKDGLIHISQLANERVNNVEDVVKLGDEVLVKVTEIDKQGRVNVSRKALLNEENKEK.

Residues Asp490 and Asp496 each coordinate Mg(2+). A KH domain is found at 557–616; it reads PKIEMIQIKPAKIKDVIGKGGETINSIIDETGVKIDIDQDGNVSIASSDAEMIKKAIKII. An S1 motif domain is found at 626-694; that stretch reads GQVYLAKVVR…KQGRVNVSRK (69 aa).

Belongs to the polyribonucleotide nucleotidyltransferase family. The cofactor is Mg(2+).

It is found in the cytoplasm. It carries out the reaction RNA(n+1) + phosphate = RNA(n) + a ribonucleoside 5'-diphosphate. Its function is as follows. Involved in mRNA degradation. Catalyzes the phosphorolysis of single-stranded polyribonucleotides processively in the 3'- to 5'-direction. The chain is Polyribonucleotide nucleotidyltransferase from Enterococcus faecalis (strain ATCC 700802 / V583).